A 279-amino-acid chain; its full sequence is Shikimate dehydrogenase (NADP(+)) (279 aa).

Residues S20–S22 and T67 contribute to the shikimate site. K71 (proton acceptor) is an active-site residue. D83 contacts NADP(+). N92 and D108 together coordinate shikimate. Residues G134–A138 and L223 contribute to the NADP(+) site. Y225 is a shikimate binding site. G246 serves as a coordination point for NADP(+).

This sequence belongs to the shikimate dehydrogenase family. As to quaternary structure, homodimer.

It carries out the reaction shikimate + NADP(+) = 3-dehydroshikimate + NADPH + H(+). It functions in the pathway metabolic intermediate biosynthesis; chorismate biosynthesis; chorismate from D-erythrose 4-phosphate and phosphoenolpyruvate: step 4/7. Involved in the biosynthesis of the chorismate, which leads to the biosynthesis of aromatic amino acids. Catalyzes the reversible NADPH linked reduction of 3-dehydroshikimate (DHSA) to yield shikimate (SA). The sequence is that of Shikimate dehydrogenase (NADP(+)) from Cereibacter sphaeroides (strain ATCC 17029 / ATH 2.4.9) (Rhodobacter sphaeroides).